A 293-amino-acid polypeptide reads, in one-letter code: Ribosomal protein L11 methyltransferase (293 aa).

4 residues coordinate S-adenosyl-L-methionine: Thr145, Gly166, Asp188, and Asn230.

It belongs to the methyltransferase superfamily. PrmA family.

Its subcellular location is the cytoplasm. It catalyses the reaction L-lysyl-[protein] + 3 S-adenosyl-L-methionine = N(6),N(6),N(6)-trimethyl-L-lysyl-[protein] + 3 S-adenosyl-L-homocysteine + 3 H(+). In terms of biological role, methylates ribosomal protein L11. The protein is Ribosomal protein L11 methyltransferase of Enterobacter sp. (strain 638).